Here is a 450-residue protein sequence, read N- to C-terminus: Phosphoglucosamine mutase (450 aa).

The active-site Phosphoserine intermediate is the Ser-101. 4 residues coordinate Mg(2+): Ser-101, Asp-241, Asp-243, and Asp-245. Phosphoserine is present on Ser-101.

Belongs to the phosphohexose mutase family. The cofactor is Mg(2+). Post-translationally, activated by phosphorylation.

It carries out the reaction alpha-D-glucosamine 1-phosphate = D-glucosamine 6-phosphate. Functionally, catalyzes the conversion of glucosamine-6-phosphate to glucosamine-1-phosphate. This is Phosphoglucosamine mutase from Ligilactobacillus salivarius (strain UCC118) (Lactobacillus salivarius).